Consider the following 400-residue polypeptide: Putative F-box protein At1g30920 (400 aa).

The F-box domain maps to 4–49 (EENTDSIPIDLILDILSRLPSKSIARCRCVSKLWESMIRQSYFTEL).

The protein is Putative F-box protein At1g30920 of Arabidopsis thaliana (Mouse-ear cress).